A 156-amino-acid polypeptide reads, in one-letter code: Small ribosomal subunit protein uS7 (156 aa).

This sequence belongs to the universal ribosomal protein uS7 family. As to quaternary structure, part of the 30S ribosomal subunit. Contacts proteins S9 and S11.

Functionally, one of the primary rRNA binding proteins, it binds directly to 16S rRNA where it nucleates assembly of the head domain of the 30S subunit. Is located at the subunit interface close to the decoding center, probably blocks exit of the E-site tRNA. The chain is Small ribosomal subunit protein uS7 from Shewanella woodyi (strain ATCC 51908 / MS32).